Consider the following 199-residue polypeptide: NAD(P)H dehydrogenase (quinone) (199 aa).

One can recognise a Flavodoxin-like domain in the interval 4-190 (VLVLYYSAYG…DGARFQGKRV (187 aa)). Residues 10 to 15 (SAYGHM) and 78 to 80 (TRY) contribute to the FMN site. Position 12 (Tyr12) interacts with NAD(+). Residue Trp98 coordinates substrate. FMN contacts are provided by residues 113–119 (STATQHG) and His134. Residues 157-185 (GGAPYGMTTTADGDGSRQPSEQELDGARF) form a disordered region. Residues 163–177 (MTTTADGDGSRQPSE) are compositionally biased toward polar residues.

This sequence belongs to the WrbA family. Requires FMN as cofactor.

It carries out the reaction a quinone + NADH + H(+) = a quinol + NAD(+). The catalysed reaction is a quinone + NADPH + H(+) = a quinol + NADP(+). The sequence is that of NAD(P)H dehydrogenase (quinone) from Brucella anthropi (strain ATCC 49188 / DSM 6882 / CCUG 24695 / JCM 21032 / LMG 3331 / NBRC 15819 / NCTC 12168 / Alc 37) (Ochrobactrum anthropi).